A 78-amino-acid polypeptide reads, in one-letter code: Ferredoxin 7Fe (78 aa).

2 consecutive 4Fe-4S ferredoxin-type domains span residues 2–29 (AYVI…IHEG) and 31–60 (DQYY…HEDF). Positions 9 and 17 each coordinate [3Fe-4S] cluster. 4 residues coordinate [4Fe-4S] cluster: Cys21, Cys40, Cys43, and Cys46. Cys50 contributes to the [3Fe-4S] cluster binding site.

As to quaternary structure, monomer. Requires [4Fe-4S] cluster as cofactor. It depends on [3Fe-4S] cluster as a cofactor.

The sequence is that of Ferredoxin 7Fe (fdxA) from Hydrogenibacillus schlegelii (Bacillus schlegelii).